A 140-amino-acid polypeptide reads, in one-letter code: Large-conductance mechanosensitive channel (140 aa).

2 consecutive transmembrane segments (helical) span residues 21–41 and 82–102; these read VGVIIGGAFGKIVESLVGDVI and GSFITVAINFMILAFIIFMMI.

It belongs to the MscL family. As to quaternary structure, homopentamer.

Its subcellular location is the cell inner membrane. Its function is as follows. Channel that opens in response to stretch forces in the membrane lipid bilayer. May participate in the regulation of osmotic pressure changes within the cell. This Leptothrix cholodnii (strain ATCC 51168 / LMG 8142 / SP-6) (Leptothrix discophora (strain SP-6)) protein is Large-conductance mechanosensitive channel.